Here is a 635-residue protein sequence, read N- to C-terminus: Threonine--tRNA ligase (635 aa).

In terms of domain architecture, TGS spans 1–61 (MVSIRLPDGS…DHDASLAIVT (61 aa)). The segment at 242–533 (DHRKLGKQLD…LIEHHAGAMP (292 aa)) is catalytic. Residues C333, H384, and H510 each contribute to the Zn(2+) site.

It belongs to the class-II aminoacyl-tRNA synthetase family. In terms of assembly, homodimer. Requires Zn(2+) as cofactor.

It is found in the cytoplasm. The catalysed reaction is tRNA(Thr) + L-threonine + ATP = L-threonyl-tRNA(Thr) + AMP + diphosphate + H(+). In terms of biological role, catalyzes the attachment of threonine to tRNA(Thr) in a two-step reaction: L-threonine is first activated by ATP to form Thr-AMP and then transferred to the acceptor end of tRNA(Thr). Also edits incorrectly charged L-seryl-tRNA(Thr). The polypeptide is Threonine--tRNA ligase (Burkholderia multivorans (strain ATCC 17616 / 249)).